A 145-amino-acid polypeptide reads, in one-letter code: UPF0179 protein Msm_0285 (145 aa).

This sequence belongs to the UPF0179 family.

The protein is UPF0179 protein Msm_0285 of Methanobrevibacter smithii (strain ATCC 35061 / DSM 861 / OCM 144 / PS).